The sequence spans 448 residues: Methylenetetrahydrofolate--tRNA-(uracil-5-)-methyltransferase TrmFO (448 aa).

10–15 (GAGLAG) lines the FAD pocket.

It belongs to the MnmG family. TrmFO subfamily. It depends on FAD as a cofactor.

Its subcellular location is the cytoplasm. It catalyses the reaction uridine(54) in tRNA + (6R)-5,10-methylene-5,6,7,8-tetrahydrofolate + NADH + H(+) = 5-methyluridine(54) in tRNA + (6S)-5,6,7,8-tetrahydrofolate + NAD(+). The enzyme catalyses uridine(54) in tRNA + (6R)-5,10-methylene-5,6,7,8-tetrahydrofolate + NADPH + H(+) = 5-methyluridine(54) in tRNA + (6S)-5,6,7,8-tetrahydrofolate + NADP(+). Functionally, catalyzes the folate-dependent formation of 5-methyl-uridine at position 54 (M-5-U54) in all tRNAs. The protein is Methylenetetrahydrofolate--tRNA-(uracil-5-)-methyltransferase TrmFO of Lactococcus lactis subsp. cremoris (strain SK11).